A 360-amino-acid chain; its full sequence is G-box-binding factor 2 (360 aa).

Residues 1–16 (MGSNEEGNPTNNSDKP) show a composition bias toward polar residues. 2 disordered regions span residues 1–26 (MGSN…EQSN) and 150–275 (KVGS…AETE). Positions 164-184 (SQSSENDGSSNGSDGNTTGGE) are enriched in low complexity. Over residues 198–208 (TGERPSSQNSL) the composition is skewed to polar residues. Positions 246 to 264 (NEKEVKREKRKQSNRESAR) are enriched in basic and acidic residues. The bZIP domain maps to 249 to 312 (EVKREKRKQS…EKLRLENEAI (64 aa)). A basic motif region spans residues 251–270 (KREKRKQSNRESARRSRLRK). Residues 277-312 (LSVKVDALVAENMSLRSKLGQLNNESEKLRLENEAI) form a leucine-zipper region. The span at 335–352 (NSVSGSKTVQHQLLNASP) shows a compositional bias: polar residues. A disordered region spans residues 335-360 (NSVSGSKTVQHQLLNASPITDPVAAS).

Belongs to the bZIP family. DNA-binding heterodimer. Interacts with GBF4. Interacts with BZIP16 and BZIP68. In terms of tissue distribution, found in both light and dark grown leaves.

The protein localises to the nucleus. In terms of biological role, binds to the G-box motif (5'-CCACGTGG-3') of the rbcS-1A gene promoter. G-box and G-box-like motifs are cis-acting elements defined in promoters of certain plant genes which are regulated by such diverse stimuli as light-induction or hormone control. GBF2 is found to bind asymmetrically to the G-box. The sequence is that of G-box-binding factor 2 (GBF2) from Arabidopsis thaliana (Mouse-ear cress).